Consider the following 335-residue polypeptide: D-arabinose 1-dehydrogenase (335 aa).

Tyrosine 58 functions as the Proton donor in the catalytic mechanism. Histidine 124 serves as a coordination point for substrate. 221–287 is an NAD(+) binding site; sequence SLLRSQETRQ…VSSMEELKLA (67 aa).

Belongs to the aldo/keto reductase family. Aldo/keto reductase 2 subfamily.

The enzyme catalyses D-arabinose + NAD(+) = D-arabinono-1,4-lactone + NADH + H(+). The chain is D-arabinose 1-dehydrogenase (ARA2) from Saccharomyces cerevisiae (strain ATCC 204508 / S288c) (Baker's yeast).